Here is a 156-residue protein sequence, read N- to C-terminus: Transcription inhibitor protein Gfh1 (156 aa).

A coiled-coil region spans residues 1 to 74 (MAREVKLTKA…LEDILSRAVI (74 aa)). Residues E20 and E24 each contribute to the Zn(2+) site.

The protein belongs to the GreA/GreB family. Interacts with RNAP.

Its function is as follows. Inhibits all catalytic activities of RNA polymerase (RNAP) by partially occluding its substrate-binding site and preventing NTP binding. The chain is Transcription inhibitor protein Gfh1 (gfh1) from Thermus thermophilus (strain ATCC 27634 / DSM 579 / HB8).